The following is a 374-amino-acid chain: 5-hydroxytryptamine receptor 1D (374 aa).

Residues 1 to 35 (MSPPNQSLEGLPQEASNRSLNVTGAWDPEVLQALR) lie on the Extracellular side of the membrane. N-linked (GlcNAc...) asparagine glycans are attached at residues asparagine 5, asparagine 17, and asparagine 21. A helical transmembrane segment spans residues 36-61 (ISLVVVLSVITLATVLSNAFVLTTIL). Residues 62–72 (LTKKLHTPANY) are Cytoplasmic-facing. A helical transmembrane segment spans residues 73–94 (LIGSLATTDLLVSILVMPISIA). Residues 95 to 106 (YTTTRTWNFGQI) lie on the Extracellular side of the membrane. Residues 107–131 (LCDIWVSSDITCCTASILHLCVIAL) form a helical membrane-spanning segment. The cysteines at positions 108 and 185 are disulfide-linked. Serotonin contacts are provided by aspartate 115 and cysteine 119. The DRY motif; important for ligand-induced conformation changes motif lies at 132–134 (DRY). The Cytoplasmic portion of the chain corresponds to 132 to 151 (DRYWAITDALEYSKRRTAGH). A helical transmembrane segment spans residues 152–173 (AAAMIAAVWIISICISIPPLFW). The Extracellular segment spans residues 174–191 (RQATAHEEMSDCLVNTSQ). A helical transmembrane segment spans residues 192–215 (ISYTIYSTCGAFYIPSILLIILYG). Topologically, residues 216-297 (RIYVAARSRI…ISAARERKAT (82 aa)) are cytoplasmic. Residues 298–323 (KTLGIILGAFIICWLPFFVVSLVLPI) traverse the membrane as a helical segment. Serine 318 lines the serotonin pocket. Residues 324 to 332 (CRDSCWIHP) lie on the Extracellular side of the membrane. The helical transmembrane segment at 333-356 (ALFDFFTWLGYLNSLINPVIYTVF) threads the bilayer. Positions 349–353 (NPVIY) match the NPxxY motif; important for ligand-induced conformation changes and signaling motif. Residues 357–374 (NEDFRQAFQKVVHFRKIS) are Cytoplasmic-facing.

Belongs to the G-protein coupled receptor 1 family. Homodimer. Heterodimer with HTR1B. In terms of tissue distribution, detected in the motor column in spinal cord, and in several cranial motor nuclei, including nucleus ambiguous, oculomotoris, trochelaris and abducens. Detected in gamma motor neurons in the lumbar spinal cord. Detected in proprioceptive sensory neurons in dorsal root ganglia.

The protein localises to the cell membrane. In terms of biological role, G-protein coupled receptor for 5-hydroxytryptamine (serotonin). Also functions as a receptor for ergot alkaloid derivatives, various anxiolytic and antidepressant drugs and other psychoactive substances. Ligand binding causes a conformation change that triggers signaling via guanine nucleotide-binding proteins (G proteins) and modulates the activity of downstream effectors, such as adenylate cyclase. HTR1D is coupled to G(i)/G(o) G alpha proteins and mediates inhibitory neurotransmission by inhibiting adenylate cyclase activity. Regulates the release of 5-hydroxytryptamine in the brain, and thereby affects neural activity. May also play a role in regulating the release of other neurotransmitters. May play a role in vasoconstriction. The chain is 5-hydroxytryptamine receptor 1D (Htr1d) from Mus musculus (Mouse).